A 949-amino-acid polypeptide reads, in one-letter code: Copper-transporting ATPase PAA1, chloroplastic (949 aa).

The N-terminal 103 residues, 1–103 (MESTLSAFST…SSSPSFRSIS (103 aa)), are a transit peptide targeting the chloroplast. The span at 113 to 126 (YNGGSGGGGGGGSE) shows a compositional bias: gly residues. The disordered stretch occupies residues 113-142 (YNGGSGGGGGGGSESGDSKSKLGANASDGV). An HMA domain is found at 148-222 (DIIILDVGGM…HLTNCGFQST (75 aa)). Positions 159 and 162 each coordinate Cu(+). Transmembrane regions (helical) follow at residues 253–274 (LAVS…FLGV), 287–306 (FHVS…LVLD), 314–334 (GSPN…SVSS), 349–369 (EEPV…QRAK), 502–524 (VAGR…WNLF), and 543–560 (LQLS…ALGL). D598 functions as the 4-aspartylphosphate intermediate in the catalytic mechanism. 807 to 814 (GDGINDAA) contributes to the ATP binding site. Mg(2+) is bound by residues D808 and D812. A run of 2 helical transmembrane segments spans residues 863 to 882 (KQNL…IAAG) and 895 to 913 (SMAG…TNSL). Residues 925 to 949 (DKNVKPEPKEGTKQPHENTRWKQSS) form a disordered region.

The protein belongs to the cation transport ATPase (P-type) (TC 3.A.3) family. Type IB subfamily. In terms of tissue distribution, expressed in the shoots and roots.

The protein localises to the plastid. It is found in the chloroplast membrane. The catalysed reaction is Cu(+)(in) + ATP + H2O = Cu(+)(out) + ADP + phosphate + H(+). Its function is as follows. Mediates copper transfer across the plastid envelope. Required for the delivery of copper into the plastid stroma, which is essential for the function of copper proteins. Seems to be selective for monovalent copper Cu(+) transport. Also plays a role in glucose signaling-mediated cell proliferation of root meristem in non-green tissues. This Arabidopsis thaliana (Mouse-ear cress) protein is Copper-transporting ATPase PAA1, chloroplastic (PAA1).